Consider the following 253-residue polypeptide: Oxidoreductase AOL_s00215g277 (253 aa).

Residues 181-203 form a helical membrane-spanning segment; that stretch reads FFGYWLTVILGYYIGSLLGYQPF.

Belongs to the oxidoreductase OpS7 family.

It localises to the membrane. Its pathway is secondary metabolite biosynthesis; terpenoid biosynthesis. Its function is as follows. Oxidoreductase; part of the gene cluster that mediates the biosynthesis of sesquiterpenyl epoxy-cyclohexenoids (SECs) such as anthrobotrisins and arthrosporols, metabolites that possess a novel hybrid carbon skeleton consisting of a polyketide-derived epoxycyclohexenol combined with a terpenoid-derived monocyclic sesquiterpenol substructure (PKS-PTS hybrid). The SEC pathway plays an important role for fungal soil colonization via decreasing fungal nematode-capturing ability. Within the pathway, the oxidoreductase AOL_s00215g277 seems to play a role in the farnesylation step of toluquinol to produce farnesyl hydroquinone, the hybrid precursor for biosynthesis of SECs. The pathway begins with the biosynthesis of 6-methylsalicylic acid (6-MSA), the first precursor of the polyketide-derived epoxycyclohexenol in arthrosporols, by the polyketide synthase (PKS) AOL_s00215g283 via condensation of 1 acetate and 3 malonate units. The 6-methylsalicylic acid decarboxylase AOL_s00215g281 then catalyzes the decarboxylation of 6-methylsalicylic acid to yield m-cresol. The cytochrome P450 monooxygenase AOL_s00215g282 further oxidizes m-cresol to yield toluquinol. With the assistance of the oxidoreductase AOL_s00215g277, the polyprenyl transferase AOL_s00215g276 catalyzes the farnesylation of toluquinol to produce farnesyl hydroquinone, the hybrid precursor for biosynthesis of SECs. Farnesyl hydroquinone undergoes epoxidation and then subsequent dehydrogenation to form farnesyl epoxy-quinone, the first and simplest SEC. The cytochrome P450 monooxygenase AOL_s00215g278 and the FAD-dependent monooxygenase AOL_s00215g279 might be involved in the oxygenation of the phenol moiety, most likely in the epoxy formation. The cytochrome P450 monooxygenases AOL_s00215g274 and AOL_s00215g280 are involved in specific regional ketone reductions at respectively C-4 and C-1 of farnesyl epoxy-quinone PubMed:33823587. This is Oxidoreductase AOL_s00215g277 from Arthrobotrys oligospora (strain ATCC 24927 / CBS 115.81 / DSM 1491) (Nematode-trapping fungus).